The following is a 452-amino-acid chain: Glycoprotein endo-alpha-1,2-mannosidase-like protein (452 aa).

Residues 1–8 (MARRRRRA) lie on the Cytoplasmic side of the membrane. The helical; Signal-anchor for type II membrane protein transmembrane segment at 9–29 (CIALFLVLLFAFGTLMGLRTL) threads the bilayer. At 30–452 (KAPDGLPALG…FIKEKEQWLM (423 aa)) the chain is on the lumenal side. The interval 40 to 90 (PGPELAPFERRPEGNPAPARAPAAPAAPPPPPPRTAAPRASLGPAEADPAP) is disordered. Residues 64–74 (PAAPPPPPPRT) show a composition bias toward pro residues.

It belongs to the glycosyl hydrolase 99 family.

It is found in the golgi apparatus membrane. The protein is Glycoprotein endo-alpha-1,2-mannosidase-like protein (Maneal) of Mus musculus (Mouse).